A 323-amino-acid polypeptide reads, in one-letter code: tRNA U34 carboxymethyltransferase (323 aa).

Carboxy-S-adenosyl-L-methionine-binding positions include K90, W104, K109, G129, 182 to 183, M197, Y201, and R316; that span reads IE.

It belongs to the class I-like SAM-binding methyltransferase superfamily. CmoB family. Homotetramer.

It carries out the reaction carboxy-S-adenosyl-L-methionine + 5-hydroxyuridine(34) in tRNA = 5-carboxymethoxyuridine(34) in tRNA + S-adenosyl-L-homocysteine + H(+). Functionally, catalyzes carboxymethyl transfer from carboxy-S-adenosyl-L-methionine (Cx-SAM) to 5-hydroxyuridine (ho5U) to form 5-carboxymethoxyuridine (cmo5U) at position 34 in tRNAs. The polypeptide is tRNA U34 carboxymethyltransferase (Idiomarina loihiensis (strain ATCC BAA-735 / DSM 15497 / L2-TR)).